Consider the following 74-residue polypeptide: MKRDIHPEYVETQVSCTCGASFTTRSTIESGTIRAEVCSECHPFYTGKQKILDTGGRVARFEARFGKASAGSKK.

Residues cysteine 16, cysteine 18, cysteine 38, and cysteine 41 each contribute to the Zn(2+) site.

This sequence belongs to the bacterial ribosomal protein bL31 family. Type A subfamily. As to quaternary structure, part of the 50S ribosomal subunit. Zn(2+) is required as a cofactor.

Functionally, binds the 23S rRNA. This is Large ribosomal subunit protein bL31 (rpmE) from Streptomyces coelicolor (strain ATCC BAA-471 / A3(2) / M145).